Here is a 506-residue protein sequence, read N- to C-terminus: Maturase K (506 aa).

The protein belongs to the intron maturase 2 family. MatK subfamily.

It localises to the plastid. It is found in the chloroplast. Its function is as follows. Usually encoded in the trnK tRNA gene intron. Probably assists in splicing its own and other chloroplast group II introns. This is Maturase K from Lactuca sativa (Garden lettuce).